Consider the following 550-residue polypeptide: Chaperonin GroEL (550 aa).

ATP-binding positions include threonine 30–proline 33, lysine 51, aspartate 87–threonine 91, glycine 415, asparagine 479–alanine 481, and aspartate 495. The disordered stretch occupies residues proline 525 to methionine 550. Over residues asparagine 540–methionine 550 the composition is skewed to gly residues.

This sequence belongs to the chaperonin (HSP60) family. In terms of assembly, forms a cylinder of 14 subunits composed of two heptameric rings stacked back-to-back. Interacts with the co-chaperonin GroES.

It is found in the cytoplasm. It carries out the reaction ATP + H2O + a folded polypeptide = ADP + phosphate + an unfolded polypeptide.. Its function is as follows. Together with its co-chaperonin GroES, plays an essential role in assisting protein folding. The GroEL-GroES system forms a nano-cage that allows encapsulation of the non-native substrate proteins and provides a physical environment optimized to promote and accelerate protein folding. This chain is Chaperonin GroEL, found in Buchnera aphidicola subsp. Cinara cedri (strain Cc).